Reading from the N-terminus, the 871-residue chain is Probable receptor-like protein kinase At2g21480 (871 aa).

Positions 1–39 (MEIRKKPNIPMCLVLDSSSRPFMTLLFTILLFLTGLASA) are cleaved as a signal peptide. Residues 40–439 (VGAVGGSPTA…GQRASMGKQG (400 aa)) are Extracellular-facing. 5 N-linked (GlcNAc...) asparagine glycosylation sites follow: Asn169, Asn182, Asn253, Asn316, and Asn381. Residues 440–460 (MVATAGFVMMFGAFVGLGAMV) form a helical membrane-spanning segment. Residues 461–871 (YKWKKRPQDW…FTQFASLNGR (411 aa)) are Cytoplasmic-facing. The Protein kinase domain occupies 525–797 (FDASEIIGVG…GDVLWNLEYA (273 aa)). Residues 531-539 (IGVGGFGNV) and Lys553 contribute to the ATP site. The Proton acceptor role is filled by Asp649. Positions 808–871 (KAEAEEVETP…FTQFASLNGR (64 aa)) are disordered. The span at 817–839 (PKPVAVPAAAPTSPAATTAAASE) shows a compositional bias: low complexity. Positions 854–871 (DQHSGTTMFTQFASLNGR) are enriched in polar residues.

The protein belongs to the protein kinase superfamily. Ser/Thr protein kinase family.

It is found in the membrane. This chain is Probable receptor-like protein kinase At2g21480, found in Arabidopsis thaliana (Mouse-ear cress).